Consider the following 1374-residue polypeptide: Probable ATP-dependent RNA helicase spindle-E (1374 aa).

The 167-residue stretch at 46 to 212 folds into the Helicase ATP-binding domain; sequence LARIRENPVI…FKTPKKVGYL (167 aa). 59–66 contacts ATP; sequence GPTGCGKT. The DEAH box signature appears at 158–161; that stretch reads DEIH. The Helicase C-terminal domain maps to 265-447; that stretch reads VCDRLIENMH…NVILKAKLLE (183 aa). The Tudor domain occupies 866-931; it reads QFAVGQMVAA…RKLDGPLAYM (66 aa).

The protein belongs to the DEAD box helicase family. DEAH subfamily.

The protein localises to the cytoplasm. The enzyme catalyses ATP + H2O = ADP + phosphate + H(+). Functionally, probable ATP-binding RNA helicase which plays a central role during gametogenesis by repressing transposable elements and preventing their mobilization, which is essential for the germline integrity. Acts via the piRNA metabolic process, which mediates the repression of transposable elements during meiosis by forming complexes composed of piRNAs and Piwi proteins and govern the methylation and subsequent repression of transposons. This chain is Probable ATP-dependent RNA helicase spindle-E (spn-E), found in Aedes aegypti (Yellowfever mosquito).